The sequence spans 297 residues: Ubiquinone biosynthesis protein COQ4, mitochondrial (297 aa).

A mitochondrion-targeting transit peptide spans 1 to 54; that stretch reads MLSSARARLPISLCSFSLPFARLPNTLSRYQETWQRLPGRTHPTRSIRTTPAYE. 4 residues coordinate Zn(2+): histidine 178, aspartate 179, histidine 182, and glutamate 194.

It belongs to the COQ4 family. Component of a multi-subunit COQ enzyme complex, composed of at least COQ3, COQ4, COQ5, COQ6, COQ7 and COQ9. It depends on Zn(2+) as a cofactor.

It is found in the mitochondrion inner membrane. It carries out the reaction a 4-hydroxy-3-methoxy-5-(all-trans-polyprenyl)benzoate + H(+) = a 2-methoxy-6-(all-trans-polyprenyl)phenol + CO2. The protein operates within cofactor biosynthesis; ubiquinone biosynthesis. Functionally, lyase that catalyzes the C1-decarboxylation of 4-hydroxy-3-methoxy-5-(all-trans-polyprenyl)benzoic acid into 2-methoxy-6-(all-trans-polyprenyl)phenol during ubiquinone biosynthesis. The protein is Ubiquinone biosynthesis protein COQ4, mitochondrial of Laccaria bicolor (strain S238N-H82 / ATCC MYA-4686) (Bicoloured deceiver).